Consider the following 41-residue polypeptide: Conotoxin Ac4.2 (41 aa).

The propeptide occupies 1-11 (FDGRNAAVNER). Pro13 is subject to 4-hydroxyproline. 2 O-linked (HexNAc...) threonine glycosylation sites follow: Thr18 and Thr20. Residues Pro29 and Pro33 each carry the 4-hydroxyproline modification. Cys40 bears the Cysteine amide mark.

It belongs to the conotoxin A superfamily. Contains 3 disulfide bonds. Expressed by the venom duct.

It localises to the secreted. Its function is as follows. Probable neurotoxin with ion channel inhibitor activity. This Conus achatinus (Little frog cone) protein is Conotoxin Ac4.2.